Reading from the N-terminus, the 48-residue chain is uncharacterized protein (48 aa).

An N-terminal signal peptide occupies residues 1-21 (MLENNVFRLMILMGGVIALIA).

This is an uncharacterized protein from Bacillus anthracis.